We begin with the raw amino-acid sequence, 382 residues long: Sulfate adenylyltransferase (382 aa).

It belongs to the sulfate adenylyltransferase family.

The enzyme catalyses sulfate + ATP + H(+) = adenosine 5'-phosphosulfate + diphosphate. It functions in the pathway sulfur metabolism; hydrogen sulfide biosynthesis; sulfite from sulfate: step 1/3. The sequence is that of Sulfate adenylyltransferase from Ignicoccus hospitalis (strain KIN4/I / DSM 18386 / JCM 14125).